The following is a 138-amino-acid chain: Large ribosomal subunit protein uL16 (138 aa).

Residues Met1 to Gly15 are compositionally biased toward basic residues. The interval Met1–Ala21 is disordered.

Belongs to the universal ribosomal protein uL16 family. In terms of assembly, part of the 50S ribosomal subunit.

Its function is as follows. Binds 23S rRNA and is also seen to make contacts with the A and possibly P site tRNAs. The protein is Large ribosomal subunit protein uL16 of Borreliella burgdorferi (strain ATCC 35210 / DSM 4680 / CIP 102532 / B31) (Borrelia burgdorferi).